Reading from the N-terminus, the 440-residue chain is Protein naked cuticle homolog 1 (440 aa).

A lipid anchor (N-myristoyl glycine) is attached at Gly-2. The 36-residue stretch at 129 to 164 (EEDNRQEWTFTLYDFDNNGKVTREDITSLLHTIYEV) folds into the EF-hand domain. 5 residues coordinate Ca(2+): Asp-142, Asp-144, Asn-146, Lys-148, and Asp-153. The segment covering 192-204 (RWKNCTQTNTDTP) has biased composition (polar residues). 3 disordered regions span residues 192-221 (RWKN…KTSE), 272-379 (AAPA…QRPK), and 421-440 (RHEH…FYQS). A compositionally biased stretch (basic and acidic residues) spans 211–221 (EKCIEDSKTSE). Residues 272–293 (AAPATEPAKPTHATRSSNQSRS) are compositionally biased toward low complexity. Residues 324-336 (RHTHALRSPKTHR) show a composition bias toward basic residues. The span at 352-362 (APPPPSVPNQT) shows a compositional bias: pro residues. The span at 422–440 (HEHHHHHEHHHHYHHFYQS) shows a compositional bias: basic residues.

This sequence belongs to the NKD family.

It localises to the cell membrane. It is found in the cytoplasm. Its function is as follows. Cell autonomous antagonist of the canonical Wnt signaling pathway. May activate a second Wnt signaling pathway that controls planar cell polarity. The polypeptide is Protein naked cuticle homolog 1 (nkd1) (Danio rerio (Zebrafish)).